The primary structure comprises 233 residues: Large ribosomal subunit protein uL1 (233 aa).

It belongs to the universal ribosomal protein uL1 family. In terms of assembly, part of the 50S ribosomal subunit.

Its function is as follows. Binds directly to 23S rRNA. The L1 stalk is quite mobile in the ribosome, and is involved in E site tRNA release. In terms of biological role, protein L1 is also a translational repressor protein, it controls the translation of the L11 operon by binding to its mRNA. This is Large ribosomal subunit protein uL1 from Polynucleobacter necessarius subsp. necessarius (strain STIR1).